The primary structure comprises 235 residues: Sugar fermentation stimulation protein homolog (235 aa).

Belongs to the SfsA family.

This chain is Sugar fermentation stimulation protein homolog, found in Bartonella henselae (strain ATCC 49882 / DSM 28221 / CCUG 30454 / Houston 1) (Rochalimaea henselae).